Here is a 565-residue protein sequence, read N- to C-terminus: Adenine deaminase 1 (565 aa).

Belongs to the metallo-dependent hydrolases superfamily. Adenine deaminase family. The cofactor is Mn(2+).

The catalysed reaction is adenine + H2O + H(+) = hypoxanthine + NH4(+). This Rhizobium meliloti (strain 1021) (Ensifer meliloti) protein is Adenine deaminase 1.